A 196-amino-acid chain; its full sequence is CASP-like protein 2A2 (196 aa).

At 1–26 the chain is on the cytoplasmic side; it reads MAQGKESVSVVEMEGSGNGPAVEMRH. Residues 27-47 form a helical membrane-spanning segment; the sequence is FETLFRLLPVGLCISALVLML. Residues 48 to 68 lie on the Extracellular side of the membrane; sequence KSEQSDQYMQLDYSNVDAFRC. Residues 69-89 traverse the membrane as a helical segment; the sequence is LAYANGICAGYSLISAFDSMV. Residues 90-98 lie on the Cytoplasmic side of the membrane; it reads PVSHHISRS. The chain crosses the membrane as a helical span at residues 99 to 119; it reads WILFLLDQGITYLMLAGGAVA. At 120 to 148 the chain is on the extracellular side; it reads TQVLYVAYKGDEKATWEQICGSYGRFCNR. A helical membrane pass occupies residues 149-169; it reads AGASVIISFFALVCFLLLSLL. Residues 170 to 196 lie on the Cytoplasmic side of the membrane; that stretch reads SAYRLFSKYDPPIHGGAKLEDQTTAQI.

The protein belongs to the Casparian strip membrane proteins (CASP) family. In terms of assembly, homodimer and heterodimers.

The protein resides in the cell membrane. The protein is CASP-like protein 2A2 of Picea sitchensis (Sitka spruce).